The chain runs to 360 residues: G-protein coupled receptor 15 (360 aa).

Topologically, residues 1–33 (MDPEETSVYLDYYYATSPNPDIRETHSHVPYTS) are extracellular. The helical transmembrane segment at 34–54 (VFLPVFYTAVFLTGVLGNLVL) threads the bilayer. The Cytoplasmic portion of the chain corresponds to 55–69 (MGALHFKPGSRRLID). The chain crosses the membrane as a helical span at residues 70–90 (IFIINLAASDFIFLVTLPLWV). At 91–120 (DKEASLGLWRTGSFLCKGSSYMISVNMHCS) the chain is on the extracellular side. A helical membrane pass occupies residues 121–141 (VFLLTCMSVDRYLAIVCPVVS). At 142-149 (RKFRRTDC) the chain is on the cytoplasmic side. Residues 150–170 (AYVVCASIWFISCLLGLPTLL) traverse the membrane as a helical segment. Over 171–192 (SRELTLIDDKPYCAEKKATPLK) the chain is Extracellular. The chain crosses the membrane as a helical span at residues 193–213 (LIWSLVALIFTFFVPLLSIVT). The Cytoplasmic segment spans residues 214–239 (CYCCIARKLCAHYQQSGKHNKKLKKS). Residues 240-260 (IKIIFIVVAAFLVSWLPFNTS) form a helical membrane-spanning segment. The Extracellular portion of the chain corresponds to 261-284 (KLLAIVSGLQQERYFPSAILQLGM). The helical transmembrane segment at 285–305 (EVSGPLAFANSCVNPFIYYIF) threads the bilayer. Topologically, residues 306 to 360 (DSYIRRAIVHCLCPCLKNYDFGSSTETSDSHLTKALSTFIHAEDFTRRRKRSVSL) are cytoplasmic. Ser-359 is subject to Phosphoserine.

It belongs to the G-protein coupled receptor 1 family. As to quaternary structure, interacts with adapter YWHAE; this interaction promotes ER-to-Golgi transport of GPR15. Phosphorylation is necessary for YWHAE binding and efficient surface expression. In terms of processing, O-glycosylated. Sialylated O-glycans in the N-terminal tail inhibits binding of GPR15LG. Post-translationally, sulfation is required for efficient binding of GPR15LG.

It is found in the cell membrane. In terms of biological role, g protein-coupled receptor that plays an important role in immune homeostasis. Acts via its natural ligand GPR15LG, a chemokine-like polypeptide strongly expressed in gastrointestinal tissues. GPR15-GPR15LG signaling axis regulates intestinal homeostasis and inflammation through the migration of immune cells. Controls thereby the specific homing of T-cells, particularly FOXP3+ regulatory T-cells (Tregs), to the large intestine lamina propria. Also required for skin localization of thymus-derived dendritic epidermal T-cells. Plays an important role in mediating cytoprotective function as well as angiogenesis of thrombomodulin. Mechanistically, preferentially signals through the Gi/o pathway to inhibit adenylate cyclase activity and activate a phosphatidylinositol-calcium second messenger system that regulates the release of Ca(2+) ions from intracellular stores. In Macaca nemestrina (Pig-tailed macaque), this protein is G-protein coupled receptor 15 (GPR15).